The primary structure comprises 258 residues: Coiled-coil domain-containing protein 127 (258 aa).

Residues 50-170 (KEIEKEKEAC…EEALAERQSI (121 aa)) are a coiled coil.

The polypeptide is Coiled-coil domain-containing protein 127 (CCDC127) (Sus scrofa (Pig)).